The primary structure comprises 237 residues: Redox-sensing transcriptional repressor Rex (237 aa).

The H-T-H motif DNA-binding region spans 45–84; sequence LYYRELHRLLAAGESSTNSRDLGAMVNVSPAVVRRDLSSI. 119-124 contacts NAD(+); the sequence is GVGSLG.

This sequence belongs to the transcriptional regulatory Rex family. In terms of assembly, homodimer.

It is found in the cytoplasm. In terms of biological role, modulates transcription in response to changes in cellular NADH/NAD(+) redox state. The polypeptide is Redox-sensing transcriptional repressor Rex (Rhodopirellula baltica (strain DSM 10527 / NCIMB 13988 / SH1)).